The chain runs to 187 residues: Peptidyl-tRNA hydrolase (187 aa).

TRNA is bound at residue Tyr-18. His-23 serves as the catalytic Proton acceptor. TRNA contacts are provided by Phe-65, Asn-67, and Asn-113.

This sequence belongs to the PTH family. As to quaternary structure, monomer.

The protein localises to the cytoplasm. The catalysed reaction is an N-acyl-L-alpha-aminoacyl-tRNA + H2O = an N-acyl-L-amino acid + a tRNA + H(+). Hydrolyzes ribosome-free peptidyl-tRNAs (with 1 or more amino acids incorporated), which drop off the ribosome during protein synthesis, or as a result of ribosome stalling. Functionally, catalyzes the release of premature peptidyl moieties from peptidyl-tRNA molecules trapped in stalled 50S ribosomal subunits, and thus maintains levels of free tRNAs and 50S ribosomes. This is Peptidyl-tRNA hydrolase from Coxiella burnetii (strain CbuK_Q154) (Coxiella burnetii (strain Q154)).